Consider the following 73-residue polypeptide: Protein kish (73 aa).

An N-terminal signal peptide occupies residues 1–21 (MTAIFNFESLLFVILLTICTC). Topologically, residues 22-52 (TYLHRQFPALLEKRKEGVTMVFWKCARIGER) are lumenal. The helical transmembrane segment at 53-73 (ASPYISLFCVFMALRFIFGSS) threads the bilayer.

It belongs to the KISH family.

The protein resides in the golgi apparatus membrane. It localises to the endoplasmic reticulum membrane. In terms of biological role, involved in the early part of the secretory pathway. The sequence is that of Protein kish (ksh1) from Schizosaccharomyces pombe (strain 972 / ATCC 24843) (Fission yeast).